The primary structure comprises 504 residues: Maturase K (504 aa).

The protein belongs to the intron maturase 2 family. MatK subfamily.

The protein resides in the plastid. It is found in the chloroplast. Functionally, usually encoded in the trnK tRNA gene intron. Probably assists in splicing its own and other chloroplast group II introns. This Gossypium turneri (Cotton) protein is Maturase K.